The primary structure comprises 413 residues: Queuine tRNA-ribosyltransferase accessory subunit 2 (413 aa).

The segment at 298 to 321 (LEKSETSGAERNGDVGAESEEPDA) is disordered. Residues cysteine 349, cysteine 351, cysteine 354, and histidine 380 each coordinate Zn(2+).

The protein belongs to the queuine tRNA-ribosyltransferase family. QTRT2 subfamily. Heterodimer of a catalytic subunit qtrt1 and an accessory subunit qtrt2. Zn(2+) serves as cofactor.

Its subcellular location is the cytoplasm. It is found in the mitochondrion outer membrane. Its function is as follows. Non-catalytic subunit of the queuine tRNA-ribosyltransferase (TGT) that catalyzes the base-exchange of a guanine (G) residue with queuine (Q) at position 34 (anticodon wobble position) in tRNAs with GU(N) anticodons (tRNA-Asp, -Asn, -His and -Tyr), resulting in the hypermodified nucleoside queuosine (7-(((4,5-cis-dihydroxy-2-cyclopenten-1-yl)amino)methyl)-7-deazaguanosine). The protein is Queuine tRNA-ribosyltransferase accessory subunit 2 of Xenopus tropicalis (Western clawed frog).